The primary structure comprises 299 residues: Regucalcin (299 aa).

Glu18 provides a ligand contact to a divalent metal cation. Arg101, Asn103, and Glu121 together coordinate substrate. Lys144 is modified (N6-succinyllysine). A divalent metal cation contacts are provided by Asn154 and Asp204. Asp204 acts as the Proton donor/acceptor in catalysis. Residues Lys244 and Lys253 each carry the N6-succinyllysine modification. Ser268 is subject to Phosphoserine.

It belongs to the SMP-30/CGR1 family. As to quaternary structure, monomer. Zn(2+) is required as a cofactor. It depends on Mn(2+) as a cofactor. Ca(2+) serves as cofactor. Requires Mg(2+) as cofactor. The cofactor is Co(2+). Post-translationally, the N-terminus is blocked. In terms of tissue distribution, detected in liver (at protein level). Hepatocytes and renal proximal tubular epithelium.

It is found in the cytoplasm. The catalysed reaction is D-glucono-1,5-lactone + H2O = D-gluconate + H(+). Its pathway is cofactor biosynthesis; L-ascorbate biosynthesis via UDP-alpha-D-glucuronate pathway; L-ascorbate from UDP-alpha-D-glucuronate: step 3/4. Functionally, gluconolactonase with low activity towards other sugar lactones, including gulonolactone and galactonolactone. Catalyzes a key step in ascorbic acid (vitamin C) biosynthesis. Can also hydrolyze diisopropyl phosphorofluoridate and phenylacetate (in vitro). Calcium-binding protein. Modulates Ca(2+) signaling, and Ca(2+)-dependent cellular processes and enzyme activities. The chain is Regucalcin (Rgn) from Rattus norvegicus (Rat).